Here is a 657-residue protein sequence, read N- to C-terminus: Polycomb protein suz12-A (657 aa).

Positions 335 to 363 (TAPVAKPLATRNSESSTVDSSKTSNIKPP) are disordered. Positions 347-358 (SESSTVDSSKTS) are enriched in low complexity. The segment at 413 to 436 (LHCPWCTLNCRKLYSLLKHLKLSH) adopts a C2H2-type zinc-finger fold. A VEFS-box region spans residues 528–604 (RLYFHSDSCT…NQMNQACMSF (77 aa)).

It belongs to the VEFS (VRN2-EMF2-FIS2-SU(Z)12) family. As to quaternary structure, component of the prc2/eed-ezh2 complex.

The protein localises to the nucleus. In terms of biological role, polycomb group (PcG) protein. Component of the prc2/eed-ezh2 complex, which methylates 'Lys-9' and 'Lys-27' of histone H3, leading to transcriptional repression of the affected target gene. The chain is Polycomb protein suz12-A (suz12a) from Danio rerio (Zebrafish).